A 276-amino-acid chain; its full sequence is Transport and Golgi organization 2 homolog (276 aa).

It belongs to the Tango2 family. In terms of tissue distribution, expressed in fetal liver, lung, heart and kidney. In brain, detected in the olfactory bulb, neocortex and cerebellum. Elevated in mitral cells and minimally expressed in bulb interneurons. In the cortex, restricted to the upper portion of layer 5. In the cerebellum, excluded from Purkinje cells but expressed in granule cells.

The protein resides in the cytoplasm. Its subcellular location is the mitochondrion. The protein localises to the golgi apparatus. Functionally, may be involved in lipid homeostasis. The protein is Transport and Golgi organization 2 homolog (Tango2) of Mus musculus (Mouse).